A 100-amino-acid polypeptide reads, in one-letter code: Large ribosomal subunit protein bL28 (100 aa).

Positions 1–25 are disordered; sequence MTRRCDITGKSVLSGNNVSHANNKS. Over residues 11 to 22 the composition is skewed to polar residues; sequence SVLSGNNVSHAN.

This sequence belongs to the bacterial ribosomal protein bL28 family.

This Acidiphilium cryptum (strain JF-5) protein is Large ribosomal subunit protein bL28.